We begin with the raw amino-acid sequence, 389 residues long: Phospho-N-acetylmuramoyl-pentapeptide-transferase (389 aa).

11 consecutive transmembrane segments (helical) span residues 25–45, 74–94, 97–117, 134–154, 167–187, 190–210, 222–242, 259–279, 286–306, 311–331, and 366–386; these read RAVMANVTALVIGLGFGPWVI, MGGVLVLISIAISTLLWCDWG, FIWVVLLVTLGYGAIGWVDDY, FFWQTLIGLVAAVYLAFSVSE, WIEGGMFADVPYKMNLIVPFF, VSYPLGVTGFIVLTYLVIVGS, GLVIMPVVLVGGGLGVFAYVM, AGELLIFCSAMAGAGLAFLWF, VFMGDVGALALGGALGTVAVI, IVLFVMGGIFVVETLSVMLQV, and QVTVRFWIITMLLVLIGLSSL.

The protein belongs to the glycosyltransferase 4 family. MraY subfamily. Mg(2+) serves as cofactor.

The protein resides in the cell inner membrane. The catalysed reaction is UDP-N-acetyl-alpha-D-muramoyl-L-alanyl-gamma-D-glutamyl-meso-2,6-diaminopimeloyl-D-alanyl-D-alanine + di-trans,octa-cis-undecaprenyl phosphate = di-trans,octa-cis-undecaprenyl diphospho-N-acetyl-alpha-D-muramoyl-L-alanyl-D-glutamyl-meso-2,6-diaminopimeloyl-D-alanyl-D-alanine + UMP. It participates in cell wall biogenesis; peptidoglycan biosynthesis. In terms of biological role, catalyzes the initial step of the lipid cycle reactions in the biosynthesis of the cell wall peptidoglycan: transfers peptidoglycan precursor phospho-MurNAc-pentapeptide from UDP-MurNAc-pentapeptide onto the lipid carrier undecaprenyl phosphate, yielding undecaprenyl-pyrophosphoryl-MurNAc-pentapeptide, known as lipid I. This chain is Phospho-N-acetylmuramoyl-pentapeptide-transferase, found in Cupriavidus metallidurans (strain ATCC 43123 / DSM 2839 / NBRC 102507 / CH34) (Ralstonia metallidurans).